A 251-amino-acid polypeptide reads, in one-letter code: tRNA (guanine-N(1)-)-methyltransferase (251 aa).

S-adenosyl-L-methionine contacts are provided by residues glycine 114 and 134–139 (IGDYVL).

Belongs to the RNA methyltransferase TrmD family. As to quaternary structure, homodimer.

Its subcellular location is the cytoplasm. The catalysed reaction is guanosine(37) in tRNA + S-adenosyl-L-methionine = N(1)-methylguanosine(37) in tRNA + S-adenosyl-L-homocysteine + H(+). In terms of biological role, specifically methylates guanosine-37 in various tRNAs. This is tRNA (guanine-N(1)-)-methyltransferase from Pelotomaculum thermopropionicum (strain DSM 13744 / JCM 10971 / SI).